The following is a 458-amino-acid chain: Histidine--tRNA ligase (458 aa).

This sequence belongs to the class-II aminoacyl-tRNA synthetase family. In terms of assembly, homodimer.

It is found in the cytoplasm. It carries out the reaction tRNA(His) + L-histidine + ATP = L-histidyl-tRNA(His) + AMP + diphosphate + H(+). In Micrococcus luteus (strain ATCC 4698 / DSM 20030 / JCM 1464 / CCM 169 / CCUG 5858 / IAM 1056 / NBRC 3333 / NCIMB 9278 / NCTC 2665 / VKM Ac-2230) (Micrococcus lysodeikticus), this protein is Histidine--tRNA ligase.